A 162-amino-acid polypeptide reads, in one-letter code: Transcription regulatory protein motB (162 aa).

Monomer. Homodimer.

Compacts the host nucleoid. Probably dysregulates hundreds of host genes including derepression of most of the H-NS regulon. Plays a role in the transcriptional regulation of middle promoters. In Enterobacteria phage T4 (Bacteriophage T4), this protein is Transcription regulatory protein motB (motB).